The following is a 124-amino-acid chain: MAPTKKGEKKKGRSAINEVVTREYTINVHKRIHGVGFKKRAPRAIKEIRKFAVKEMGTPDVRIDTRLNKAVWSKGVRNVPYRIRVRLSRKRNEDEDSPNKLYTLVTYVPVTTCKGLQTVNVDEN.

This sequence belongs to the eukaryotic ribosomal protein eL31 family. As to quaternary structure, component of the large ribosomal subunit.

It is found in the cytoplasm. In terms of biological role, component of the large ribosomal subunit. The ribosome is a large ribonucleoprotein complex responsible for the synthesis of proteins in the cell. In Paralichthys olivaceus (Bastard halibut), this protein is Large ribosomal subunit protein eL31 (rpl31).